We begin with the raw amino-acid sequence, 104 residues long: Ig lambda-1 chain C region (104 aa).

One can recognise an Ig-like domain in the interval 6-99; it reads PSVTLFPPSS…EENTVEKSLS (94 aa). A disulfide bridge connects residues Cys27 and Cys85.

The polypeptide is Ig lambda-1 chain C region (Rattus norvegicus (Rat)).